A 308-amino-acid chain; its full sequence is Pantothenate synthetase (308 aa).

39 to 46 (MGALHDGH) serves as a coordination point for ATP. The active-site Proton donor is the His-46. Gln-71 is a binding site for (R)-pantoate. Residue Gln-71 participates in beta-alanine binding. ATP is bound at residue 157–160 (GEKD). Gln-163 contacts (R)-pantoate. Residues Val-186 and 194 to 197 (MSSR) each bind ATP. A disordered region spans residues 286-308 (IETPAGTAGPDGDRQYAQSPWRN).

This sequence belongs to the pantothenate synthetase family. In terms of assembly, homodimer.

The protein resides in the cytoplasm. It carries out the reaction (R)-pantoate + beta-alanine + ATP = (R)-pantothenate + AMP + diphosphate + H(+). It participates in cofactor biosynthesis; (R)-pantothenate biosynthesis; (R)-pantothenate from (R)-pantoate and beta-alanine: step 1/1. In terms of biological role, catalyzes the condensation of pantoate with beta-alanine in an ATP-dependent reaction via a pantoyl-adenylate intermediate. The sequence is that of Pantothenate synthetase from Mycolicibacterium paratuberculosis (strain ATCC BAA-968 / K-10) (Mycobacterium paratuberculosis).